A 500-amino-acid chain; its full sequence is 7-alpha-hydroxycholest-4-en-3-one 12-alpha-hydroxylase (500 aa).

Residues 4–24 (WCTVLGALLTVVGCLCLSLLL) traverse the membrane as a helical segment. Ser325 is subject to Phosphoserine. Cys439 is a binding site for heme.

The protein belongs to the cytochrome P450 family. Requires heme as cofactor. Expressed in liver.

The protein localises to the endoplasmic reticulum membrane. It localises to the microsome membrane. The catalysed reaction is 7alpha-hydroxycholest-4-en-3-one + reduced [NADPH--hemoprotein reductase] + O2 = 7alpha,12alpha-dihydroxycholest-4-en-3-one + oxidized [NADPH--hemoprotein reductase] + H2O + H(+). It catalyses the reaction 5beta-cholestane-3alpha,7alpha-diol + reduced [NADPH--hemoprotein reductase] + O2 = 5beta-cholestane-3alpha,7alpha,12alpha-triol + oxidized [NADPH--hemoprotein reductase] + H2O + H(+). The enzyme catalyses chenodeoxycholate + reduced [NADPH--hemoprotein reductase] + O2 = cholate + oxidized [NADPH--hemoprotein reductase] + H2O + H(+). Its pathway is lipid metabolism; bile acid biosynthesis. A cytochrome P450 monooxygenase involved in primary bile acid biosynthesis. Catalyzes the 12alpha-hydroxylation of 7alpha-hydroxy-4-cholesten-3-one, an intermediate metabolite in cholic acid biosynthesis. Controls biliary balance of cholic acid and chenodeoxycholic acid, ultimately regulating the intestinal absorption of dietary lipids. Mechanistically, uses molecular oxygen inserting one oxygen atom into a substrate, and reducing the second into a water molecule, with two electrons provided by NADPH via cytochrome P450 reductase (CPR; NADPH--hemoprotein reductase). This Mus musculus (Mouse) protein is 7-alpha-hydroxycholest-4-en-3-one 12-alpha-hydroxylase (Cyp8b1).